Reading from the N-terminus, the 382-residue chain is Lipid-A-disaccharide synthase (382 aa).

It belongs to the LpxB family.

It catalyses the reaction 2-N,3-O-bis[(3R)-3-hydroxytetradecanoyl]-alpha-D-glucosaminyl 1-phosphate + UDP-2-N,3-O-bis[(3R)-3-hydroxytetradecanoyl]-alpha-D-glucosamine = lipid A disaccharide (E. coli) + UDP + H(+). It carries out the reaction a lipid X + a UDP-2-N,3-O-bis[(3R)-3-hydroxyacyl]-alpha-D-glucosamine = a lipid A disaccharide + UDP + H(+). It functions in the pathway glycolipid biosynthesis; lipid IV(A) biosynthesis; lipid IV(A) from (3R)-3-hydroxytetradecanoyl-[acyl-carrier-protein] and UDP-N-acetyl-alpha-D-glucosamine: step 5/6. Its function is as follows. Condensation of UDP-2,3-diacylglucosamine and 2,3-diacylglucosamine-1-phosphate to form lipid A disaccharide, a precursor of lipid A, a phosphorylated glycolipid that anchors the lipopolysaccharide to the outer membrane of the cell. This is Lipid-A-disaccharide synthase from Escherichia coli O7:K1 (strain IAI39 / ExPEC).